The sequence spans 580 residues: Proline--tRNA ligase (580 aa).

The protein belongs to the class-II aminoacyl-tRNA synthetase family. ProS type 1 subfamily. Homodimer.

It is found in the cytoplasm. The enzyme catalyses tRNA(Pro) + L-proline + ATP = L-prolyl-tRNA(Pro) + AMP + diphosphate. Functionally, catalyzes the attachment of proline to tRNA(Pro) in a two-step reaction: proline is first activated by ATP to form Pro-AMP and then transferred to the acceptor end of tRNA(Pro). As ProRS can inadvertently accommodate and process non-cognate amino acids such as alanine and cysteine, to avoid such errors it has two additional distinct editing activities against alanine. One activity is designated as 'pretransfer' editing and involves the tRNA(Pro)-independent hydrolysis of activated Ala-AMP. The other activity is designated 'posttransfer' editing and involves deacylation of mischarged Ala-tRNA(Pro). The misacylated Cys-tRNA(Pro) is not edited by ProRS. The sequence is that of Proline--tRNA ligase from Maridesulfovibrio salexigens (strain ATCC 14822 / DSM 2638 / NCIMB 8403 / VKM B-1763) (Desulfovibrio salexigens).